The chain runs to 150 residues: Large ribosomal subunit protein bL9 (150 aa).

This sequence belongs to the bacterial ribosomal protein bL9 family.

In terms of biological role, binds to the 23S rRNA. This is Large ribosomal subunit protein bL9 from Mycoplasma genitalium (strain ATCC 33530 / DSM 19775 / NCTC 10195 / G37) (Mycoplasmoides genitalium).